Reading from the N-terminus, the 335-residue chain is Flagellar P-ring protein (335 aa).

A signal peptide spans 1-17; the sequence is MNKPMLMLITFATSLLA.

This sequence belongs to the FlgI family. In terms of assembly, the basal body constitutes a major portion of the flagellar organelle and consists of four rings (L,P,S, and M) mounted on a central rod.

The protein resides in the periplasm. The protein localises to the bacterial flagellum basal body. Assembles around the rod to form the L-ring and probably protects the motor/basal body from shearing forces during rotation. In Borreliella burgdorferi (strain ZS7) (Borrelia burgdorferi), this protein is Flagellar P-ring protein.